The primary structure comprises 186 residues: Ribosome-recycling factor (186 aa).

This sequence belongs to the RRF family.

It localises to the cytoplasm. In terms of biological role, responsible for the release of ribosomes from messenger RNA at the termination of protein biosynthesis. May increase the efficiency of translation by recycling ribosomes from one round of translation to another. The sequence is that of Ribosome-recycling factor from Azorhizobium caulinodans (strain ATCC 43989 / DSM 5975 / JCM 20966 / LMG 6465 / NBRC 14845 / NCIMB 13405 / ORS 571).